Reading from the N-terminus, the 729-residue chain is Cellulose synthase-like protein E1 (729 aa).

Transmembrane regions (helical) follow at residues 29–49 (VIAY…IWFY) and 64–84 (LIWF…VVTQ). Catalysis depends on residues Asp-152 and Asp-443. Helical transmembrane passes span 526 to 546 (LPVL…IPLF), 553 to 573 (WFIP…AEFL), 644 to 664 (MFLV…AAVA), 680 to 700 (QFVI…GMLL), and 709 to 729 (MSVT…LAFL).

The protein belongs to the glycosyltransferase 2 family. Plant cellulose synthase-like E subfamily.

It is found in the golgi apparatus membrane. Its function is as follows. Thought to be a Golgi-localized beta-glycan synthase that polymerize the backbones of noncellulosic polysaccharides (hemicelluloses) of plant cell wall. In Arabidopsis thaliana (Mouse-ear cress), this protein is Cellulose synthase-like protein E1 (CSLE1).